Here is a 499-residue protein sequence, read N- to C-terminus: Putative sodium-dependent excitatory amino acid transporter glt-4 (499 aa).

Topologically, residues 1–7 are cytoplasmic; the sequence is MAKLSKE. 3 helical membrane-spanning segments follow: residues 8-28, 50-70, and 87-107; these read NLLL…GFSL, FVQM…ITSL, and IYYT…VSVI. Asn-165 is a glycosylation site (N-linked (GlcNAc...) asparagine). 3 helical membrane-spanning segments follow: residues 194–217, 227–254, and 276–297; these read VSDG…IGVI, FFKS…TFLI, and ITVI…CVVL. The discontinuously helical intramembrane region spans 303 to 333; it reads IKFVGGMAQALLTALATSSSSATLPLSIKCC. L-aspartate is bound at residue 320 to 322; sequence SSS. Residues 343–369 form a helical membrane-spanning segment; sequence VTRFVLPLGATINMDGTALYEAVAAIY. 3 residues coordinate Na(+): Gly-351, Thr-353, and Asn-355. Residues Thr-359, 400–404, Asp-433, and Asn-440 contribute to the L-aspartate site; that span reads IPQAG. Residues 383–416 constitute an intramembrane region (discontinuously helical); the sequence is VVLVSLTATLASIGAAGIPQAGIVTMIMVLIAIG. The chain crosses the membrane as a helical span at residues 430–451; the sequence is FMLDRLRTTVNVHGDSIATAVI. Asn-440 and Asp-444 together coordinate Na(+).

This sequence belongs to the dicarboxylate/amino acid:cation symporter (DAACS) (TC 2.A.23) family.

The protein resides in the cell membrane. Functionally, sodium-dependent, high-affinity amino acid transporter that mediates the uptake of L-glutamate and also L-aspartate and D-aspartate. Functions as a symporter that transports one amino acid molecule together with two or three Na(+) ions and one proton, in parallel with the counter-transport of one K(+) ion. Mediates Cl(-) flux that is not coupled to amino acid transport; this avoids the accumulation of negative charges due to aspartate and Na(+) symport. This chain is Putative sodium-dependent excitatory amino acid transporter glt-4 (glt-4), found in Caenorhabditis elegans.